A 455-amino-acid polypeptide reads, in one-letter code: Adenylosuccinate synthetase isozyme 2 (455 aa).

Positions 1–25 are disordered; sequence MSDSGDAQPQDGGNSSSSRGKSPSV. Residues 12–25 show a composition bias toward low complexity; that stretch reads GGNSSSSRGKSPSV. Residues 38 to 44 and 66 to 68 each bind GTP; these read GDEGKGK and GHT. Asp39 serves as the catalytic Proton acceptor. Mg(2+) is bound by residues Asp39 and Gly66. Residue Asp39 coordinates substrate. Residues 39–42, 64–67, Thr161, Arg175, Asn254, Thr269, and Arg333 each bind IMP; these read DEGK and NAGH. His67 (proton donor) is an active-site residue. 329–335 serves as a coordination point for substrate; sequence VTTGRKR. GTP-binding positions include Arg335, 361–363, and 443–446; these read KLD and GVGK.

It belongs to the adenylosuccinate synthetase family. In terms of assembly, homodimer. It depends on Mg(2+) as a cofactor.

Its subcellular location is the cytoplasm. It is found in the mitochondrion. The enzyme catalyses IMP + L-aspartate + GTP = N(6)-(1,2-dicarboxyethyl)-AMP + GDP + phosphate + 2 H(+). Its pathway is purine metabolism; AMP biosynthesis via de novo pathway; AMP from IMP: step 1/2. With respect to regulation, inhibited competitively by AMP and IMP and non-competitively by fructose 1,6-bisphosphate. In terms of biological role, plays an important role in the de novo pathway and in the salvage pathway of purine nucleotide biosynthesis. Catalyzes the first committed step in the biosynthesis of AMP from IMP. In Danio rerio (Zebrafish), this protein is Adenylosuccinate synthetase isozyme 2 (adss2).